The following is a 511-amino-acid chain: Sodium/hydrogen exchanger 9B1 (511 aa).

Residues M1–H10 are compositionally biased toward basic and acidic residues. The segment at M1 to S41 is disordered. Positions F16–T31 are enriched in polar residues. The next 13 membrane-spanning stretches (helical) occupy residues I67–S87, L95–I115, R116–I136, W152–L172, L187–M207, F215–V235, V260–V280, I284–V304, I337–K357, I368–V388, I398–I418, I431–V451, and V472–G492.

The protein belongs to the monovalent cation:proton antiporter 1 (CPA1) transporter (TC 2.A.36) family.

It localises to the cell projection. The protein resides in the cilium. It is found in the flagellum membrane. Sperm-specific Na(+)/H(+) exchanger involved in intracellular pH regulation of spermatozoa. Involved in sperm motility and fertility. The chain is Sodium/hydrogen exchanger 9B1 (SLC9B1) from Macaca fascicularis (Crab-eating macaque).